The chain runs to 508 residues: Photosystem II CP47 reaction center protein (508 aa).

6 consecutive transmembrane segments (helical) span residues 21-36 (AVHL…WAGS), 101-115 (IILS…IWHW), 140-156 (GIHL…FGAF), 203-218 (IAAG…FHLS), 237-252 (VLSS…AFVV), and 457-472 (NFAL…HGSR).

Belongs to the PsbB/PsbC family. PsbB subfamily. In terms of assembly, PSII is composed of 1 copy each of membrane proteins PsbA, PsbB, PsbC, PsbD, PsbE, PsbF, PsbH, PsbI, PsbJ, PsbK, PsbL, PsbM, PsbT, PsbX, PsbY, PsbZ, Psb30/Ycf12, at least 3 peripheral proteins of the oxygen-evolving complex and a large number of cofactors. It forms dimeric complexes. The cofactor is Binds multiple chlorophylls. PSII binds additional chlorophylls, carotenoids and specific lipids..

The protein localises to the plastid. It localises to the chloroplast thylakoid membrane. In terms of biological role, one of the components of the core complex of photosystem II (PSII). It binds chlorophyll and helps catalyze the primary light-induced photochemical processes of PSII. PSII is a light-driven water:plastoquinone oxidoreductase, using light energy to abstract electrons from H(2)O, generating O(2) and a proton gradient subsequently used for ATP formation. The chain is Photosystem II CP47 reaction center protein from Staurastrum punctulatum (Green alga).